We begin with the raw amino-acid sequence, 311 residues long: Malate dehydrogenase (311 aa).

NAD(+)-binding positions include 7–13 (GAAGGIG) and aspartate 34. Substrate contacts are provided by arginine 81 and arginine 87. Residues asparagine 94 and 117 to 119 (ITN) contribute to the NAD(+) site. Asparagine 119 and arginine 153 together coordinate substrate. Histidine 177 serves as the catalytic Proton acceptor. Methionine 227 contacts NAD(+).

It belongs to the LDH/MDH superfamily. MDH type 1 family. Homodimer.

It carries out the reaction (S)-malate + NAD(+) = oxaloacetate + NADH + H(+). In terms of biological role, catalyzes the reversible oxidation of malate to oxaloacetate. The protein is Malate dehydrogenase of Aliivibrio fischeri (strain ATCC 700601 / ES114) (Vibrio fischeri).